Reading from the N-terminus, the 400-residue chain is Lysophospholipid transporter LplT (400 aa).

12 helical membrane-spanning segments follow: residues 19–39 (VIVA…ATLA), 53–73 (VLQM…GQIA), 91–111 (AGAA…LVGI), 139–159 (LMEA…GVLA), 164–184 (IAAL…NLFI), 195–213 (SWRL…VVLW), 227–247 (LFWG…PVAL), 257–277 (YLNA…AKLV), 281–301 (TVSR…IFSL), 304–324 (ALLP…FFVV), 352–372 (NSAM…GVPA), and 373–393 (VAIG…LWIW).

It belongs to the major facilitator superfamily. LplT (TC 2.A.1.42) family.

Its subcellular location is the cell inner membrane. Its function is as follows. Catalyzes the facilitated diffusion of 2-acyl-glycero-3-phosphoethanolamine (2-acyl-GPE) into the cell. The chain is Lysophospholipid transporter LplT from Salmonella schwarzengrund (strain CVM19633).